The primary structure comprises 275 residues: Large ribosomal subunit protein uL2cz/uL2cy (275 aa).

Disordered stretches follow at residues 1 to 26 (MAIH…VKSN) and 224 to 275 (MNPV…RRTK). A compositionally biased stretch (polar residues) spans 7 to 26 (KTSTPSTRNGTVDSRQVKSN).

It belongs to the universal ribosomal protein uL2 family. As to quaternary structure, part of the 50S ribosomal subunit.

The protein resides in the plastid. The protein localises to the chloroplast. The sequence is that of Large ribosomal subunit protein uL2cz/uL2cy (rpl2-A) from Phaseolus angularis (Azuki bean).